The chain runs to 387 residues: Mannitol-1-phosphate 5-dehydrogenase (387 aa).

Residue 3 to 14 (AVHFGAGNIGRG) coordinates NAD(+).

This sequence belongs to the mannitol dehydrogenase family.

It carries out the reaction D-mannitol 1-phosphate + NAD(+) = beta-D-fructose 6-phosphate + NADH + H(+). This Pseudarthrobacter chlorophenolicus (strain ATCC 700700 / DSM 12829 / CIP 107037 / JCM 12360 / KCTC 9906 / NCIMB 13794 / A6) (Arthrobacter chlorophenolicus) protein is Mannitol-1-phosphate 5-dehydrogenase.